The following is a 734-amino-acid chain: Elongation factor 2 (734 aa).

Residues 18–259 enclose the tr-type G domain; that stretch reads EQIRNIGITA…MVVKYVPNPR (242 aa). GTP contacts are provided by residues 27–34, 93–97, and 147–150; these read AHVDHGKT, DTPGH, and NKID. At histidine 600 the chain carries Diphthamide.

The protein belongs to the TRAFAC class translation factor GTPase superfamily. Classic translation factor GTPase family. EF-G/EF-2 subfamily.

The protein localises to the cytoplasm. Catalyzes the GTP-dependent ribosomal translocation step during translation elongation. During this step, the ribosome changes from the pre-translocational (PRE) to the post-translocational (POST) state as the newly formed A-site-bound peptidyl-tRNA and P-site-bound deacylated tRNA move to the P and E sites, respectively. Catalyzes the coordinated movement of the two tRNA molecules, the mRNA and conformational changes in the ribosome. In Desulfurococcus mucosus (Desulfurococcus mobilis), this protein is Elongation factor 2 (fusA).